The primary structure comprises 59 residues: Large ribosomal subunit protein uL30 (59 aa).

This sequence belongs to the universal ribosomal protein uL30 family. As to quaternary structure, part of the 50S ribosomal subunit.

The sequence is that of Large ribosomal subunit protein uL30 from Leptospira interrogans serogroup Icterohaemorrhagiae serovar copenhageni (strain Fiocruz L1-130).